Reading from the N-terminus, the 212-residue chain is Glycerol-3-phosphate acyltransferase (212 aa).

5 consecutive transmembrane segments (helical) span residues 10–30 (FAAL…AVVV), 90–110 (GYGL…SLGF), 124–144 (FAVS…VAVV), 150–170 (LAAL…GGTI), and 171–191 (WPLN…LFYR).

This sequence belongs to the PlsY family. Probably interacts with PlsX.

Its subcellular location is the cell inner membrane. The catalysed reaction is an acyl phosphate + sn-glycerol 3-phosphate = a 1-acyl-sn-glycero-3-phosphate + phosphate. It functions in the pathway lipid metabolism; phospholipid metabolism. Functionally, catalyzes the transfer of an acyl group from acyl-phosphate (acyl-PO(4)) to glycerol-3-phosphate (G3P) to form lysophosphatidic acid (LPA). This enzyme utilizes acyl-phosphate as fatty acyl donor, but not acyl-CoA or acyl-ACP. This is Glycerol-3-phosphate acyltransferase from Bordetella avium (strain 197N).